A 211-amino-acid chain; its full sequence is Cytochrome c biogenesis ATP-binding export protein CcmA (211 aa).

Residues 8 to 210 (LEAKNLQCER…EVRRIQLGAV (203 aa)) enclose the ABC transporter domain. Residue 40–47 (GPNGAGKT) participates in ATP binding.

Belongs to the ABC transporter superfamily. CcmA exporter (TC 3.A.1.107) family. As to quaternary structure, the complex is composed of two ATP-binding proteins (CcmA) and two transmembrane proteins (CcmB).

It is found in the cell inner membrane. The catalysed reaction is heme b(in) + ATP + H2O = heme b(out) + ADP + phosphate + H(+). Its function is as follows. Part of the ABC transporter complex CcmAB involved in the biogenesis of c-type cytochromes; once thought to export heme, this seems not to be the case, but its exact role is uncertain. Responsible for energy coupling to the transport system. This chain is Cytochrome c biogenesis ATP-binding export protein CcmA, found in Hahella chejuensis (strain KCTC 2396).